A 317-amino-acid polypeptide reads, in one-letter code: DNA-directed RNA polymerase subunit alpha (317 aa).

The segment at 1–230 is alpha N-terminal domain (alpha-NTD); it reads MIEIEMEKPK…EHLNLFITLT (230 aa). Residues 247-317 form an alpha C-terminal domain (alpha-CTD) region; it reads KEKVLEMTIE…LGLGLRPSDE (71 aa).

The protein belongs to the RNA polymerase alpha chain family. Homodimer. The RNAP catalytic core consists of 2 alpha, 1 beta, 1 beta' and 1 omega subunit. When a sigma factor is associated with the core the holoenzyme is formed, which can initiate transcription.

It catalyses the reaction RNA(n) + a ribonucleoside 5'-triphosphate = RNA(n+1) + diphosphate. Functionally, DNA-dependent RNA polymerase catalyzes the transcription of DNA into RNA using the four ribonucleoside triphosphates as substrates. The polypeptide is DNA-directed RNA polymerase subunit alpha (Alkaliphilus oremlandii (strain OhILAs) (Clostridium oremlandii (strain OhILAs))).